The chain runs to 161 residues: Protein yippee-like B0546.4 (161 aa).

The region spanning 14 to 111 (SLYGCVVCNT…IENANFEKIA (98 aa)) is the Yippee domain. Residues C18, C21, C74, and C77 each contribute to the Zn(2+) site. A disordered region spans residues 117-161 (PLGEDRQEAPPAPNLEMSRYPLEAEKKSRPQYRTVSVSSSSSAEC). Residues 151–161 (VSVSSSSSAEC) are compositionally biased toward low complexity.

Belongs to the yippee family.

In Caenorhabditis elegans, this protein is Protein yippee-like B0546.4.